We begin with the raw amino-acid sequence, 743 residues long: Type VI secretion system spike protein VgrG1 (743 aa).

Belongs to the VgrG protein family.

The protein localises to the secreted. It catalyses the reaction L-arginyl-[protein] + NAD(+) = N(omega)-(ADP-D-ribosyl)-L-arginyl-[protein] + nicotinamide + H(+). Part of the type VI secretion system specialized secretion system, which delivers several virulence factors in both prokaryotic and eukaryotic cells during infection. Acts directly as an secreted effector with an actin ADP-ribosyltransferase activity that disrupts the host actin cytoskeleton, leading to a decrease in host cell viability and an increase in apoptosis. The chain is Type VI secretion system spike protein VgrG1 (vgrG1) from Aeromonas hydrophila subsp. hydrophila (strain ATCC 7966 / DSM 30187 / BCRC 13018 / CCUG 14551 / JCM 1027 / KCTC 2358 / NCIMB 9240 / NCTC 8049).